The chain runs to 316 residues: Ribosomal RNA small subunit methyltransferase H (316 aa).

Residues 42 to 44, Asp-62, Phe-86, Asp-104, and Gln-111 contribute to the S-adenosyl-L-methionine site; that span reads GGH.

This sequence belongs to the methyltransferase superfamily. RsmH family.

Its subcellular location is the cytoplasm. It carries out the reaction cytidine(1402) in 16S rRNA + S-adenosyl-L-methionine = N(4)-methylcytidine(1402) in 16S rRNA + S-adenosyl-L-homocysteine + H(+). In terms of biological role, specifically methylates the N4 position of cytidine in position 1402 (C1402) of 16S rRNA. The chain is Ribosomal RNA small subunit methyltransferase H from Polynucleobacter necessarius subsp. necessarius (strain STIR1).